Reading from the N-terminus, the 341-residue chain is Protein BIG GRAIN 1-like C (341 aa).

Disordered regions lie at residues 28–61 (DGLQ…LTTL) and 76–138 (SSTT…SDDD). Residues 52-61 (NKKDDKLTTL) are compositionally biased toward basic and acidic residues. Residues 76 to 92 (SSTTTTNSSDSSSFSSS) are compositionally biased toward low complexity. Basic and acidic residues predominate over residues 105-138 (KLAEQGKRSGDERQRTKRTVMDNDSRLFSKSDDD).

The protein belongs to the BIG GRAIN 1 (BG1) plant protein family.

It is found in the cell membrane. Involved in auxin transport. Regulator of the auxin signaling pathway. In Arabidopsis thaliana (Mouse-ear cress), this protein is Protein BIG GRAIN 1-like C.